We begin with the raw amino-acid sequence, 356 residues long: MRLTDFSFELPESLIAHYPQAQRSACRLLSLDGPTGDLTHGTFTDLLDKLNPGDLLVFNNTRVIPARLFGRKASGGKIEVLVERMLDDHRVLAHIRASKAPKPGAELLLGDDESVNATMTARHDALFEVQFNDARPVLDILNSIGHMPLPPYIERPDEEADRELYQTVYSQKPGAVAAPTAGLHFDEPLLERLRAKGIEMAFVTLHVGAGTFQPVRVESIEDHVMHSEYAEVPQEVVDAVLAAKARGNKVVAVGTTSVRSLESAAQAAQDALIAPFFGDTQIFIYPGYQYKVIDALVTNFHLPESTLIMLVSAFAGYKHTMNAYREAVKAEYRFFSYGDAMYITYNPQAINERPGE.

This sequence belongs to the QueA family. In terms of assembly, monomer.

The protein localises to the cytoplasm. It carries out the reaction 7-aminomethyl-7-carbaguanosine(34) in tRNA + S-adenosyl-L-methionine = epoxyqueuosine(34) in tRNA + adenine + L-methionine + 2 H(+). It functions in the pathway tRNA modification; tRNA-queuosine biosynthesis. In terms of biological role, transfers and isomerizes the ribose moiety from AdoMet to the 7-aminomethyl group of 7-deazaguanine (preQ1-tRNA) to give epoxyqueuosine (oQ-tRNA). This chain is S-adenosylmethionine:tRNA ribosyltransferase-isomerase, found in Cronobacter sakazakii (strain ATCC BAA-894) (Enterobacter sakazakii).